A 452-amino-acid chain; its full sequence is Elongation factor Tu, mitochondrial (452 aa).

A mitochondrion-targeting transit peptide spans 1 to 43; that stretch reads MAAATLLRATPRFSGLCASPTPFLQGRLRPLKAPASPFLCRGL. Positions 55 to 251 constitute a tr-type G domain; sequence KPHVNVGTIG…AVDTYIPVPT (197 aa). A G1 region spans residues 64–71; that stretch reads GHVDHGKT. Positions 67, 69, 70, 71, and 72 each coordinate GTP. Threonine 71 serves as a coordination point for Mg(2+). Lysine 79 carries the N6-acetyllysine modification. Position 88 is an N6-acetyllysine; alternate (lysine 88). The residue at position 88 (lysine 88) is an N6-succinyllysine; alternate. The segment at 105–109 is G2; sequence GITIN. Residues 126-129 are G3; it reads DCPG. GTP contacts are provided by asparagine 181, aspartate 184, serine 219, alanine 220, and leucine 221. Residues 181–184 form a G4 region; that stretch reads NKAD. Positions 219–221 are G5; it reads SAL. An N6-succinyllysine modification is found at lysine 234. An N6-acetyllysine modification is found at lysine 256. A Phosphothreonine modification is found at threonine 278. An N6-succinyllysine modification is found at lysine 286. Serine 312 carries the post-translational modification Phosphoserine. N6-acetyllysine is present on residues lysine 361 and lysine 418.

Belongs to the TRAFAC class translation factor GTPase superfamily. Classic translation factor GTPase family. EF-Tu/EF-1A subfamily. Interacts with NLRX1. Interacts with ATG16L1.

It localises to the mitochondrion. It catalyses the reaction GTP + H2O = GDP + phosphate + H(+). GTP hydrolase that promotes the GTP-dependent binding of aminoacyl-tRNA to the A-site of ribosomes during protein biosynthesis. Plays a role in the regulation of autophagy and innate immunity. Recruits ATG5-ATG12 and NLRX1 at mitochondria and serves as a checkpoint of the RIGI-MAVS pathway. In turn, inhibits RLR-mediated type I interferon while promoting autophagy. The polypeptide is Elongation factor Tu, mitochondrial (Rattus norvegicus (Rat)).